The sequence spans 209 residues: Guanylate kinase (209 aa).

The region spanning 16–198 (GRLVIISGPS…AVTEICQILL (183 aa)) is the Guanylate kinase-like domain. Position 23–30 (23–30 (GPSGAGKS)) interacts with ATP.

The protein belongs to the guanylate kinase family.

It is found in the cytoplasm. The catalysed reaction is GMP + ATP = GDP + ADP. Essential for recycling GMP and indirectly, cGMP. The protein is Guanylate kinase of Rhodopirellula baltica (strain DSM 10527 / NCIMB 13988 / SH1).